Here is a 160-residue protein sequence, read N- to C-terminus: Nucleotide-binding protein AHA_1129 (160 aa).

It belongs to the YajQ family.

In terms of biological role, nucleotide-binding protein. In Aeromonas hydrophila subsp. hydrophila (strain ATCC 7966 / DSM 30187 / BCRC 13018 / CCUG 14551 / JCM 1027 / KCTC 2358 / NCIMB 9240 / NCTC 8049), this protein is Nucleotide-binding protein AHA_1129.